We begin with the raw amino-acid sequence, 429 residues long: Glutamate-1-semialdehyde 2,1-aminomutase (429 aa).

Lysine 267 bears the N6-(pyridoxal phosphate)lysine mark.

It belongs to the class-III pyridoxal-phosphate-dependent aminotransferase family. HemL subfamily. In terms of assembly, homodimer. The cofactor is pyridoxal 5'-phosphate.

The protein resides in the cytoplasm. It carries out the reaction (S)-4-amino-5-oxopentanoate = 5-aminolevulinate. It participates in porphyrin-containing compound metabolism; protoporphyrin-IX biosynthesis; 5-aminolevulinate from L-glutamyl-tRNA(Glu): step 2/2. This is Glutamate-1-semialdehyde 2,1-aminomutase from Xanthomonas oryzae pv. oryzae (strain MAFF 311018).